Reading from the N-terminus, the 131-residue chain is Fumarate reductase subunit C (131 aa).

The next 3 membrane-spanning stretches (helical) occupy residues 30–50, 58–78, and 109–129; these read EGTC…VFAL, AGFV…VTLI, and IVRG…AVAL.

It belongs to the FrdC family. In terms of assembly, part of an enzyme complex containing four subunits: a flavoprotein (FrdA), an iron-sulfur protein (FrdB), and two hydrophobic anchor proteins (FrdC and FrdD).

It localises to the cell inner membrane. Functionally, two distinct, membrane-bound, FAD-containing enzymes are responsible for the catalysis of fumarate and succinate interconversion; fumarate reductase is used in anaerobic growth, and succinate dehydrogenase is used in aerobic growth. Anchors the catalytic components of the fumarate reductase complex to the cell inner membrane, binds quinones. This is Fumarate reductase subunit C from Proteus vulgaris.